The primary structure comprises 373 residues: Geraniol dehydrogenase (373 aa).

Zn(2+) contacts are provided by Cys47, His67, Cys96, Cys99, Cys102, Cys110, and Cys175.

Belongs to the zinc-containing alcohol dehydrogenase family. As to quaternary structure, homodimer. Requires Zn(2+) as cofactor.

It carries out the reaction (2E)-geraniol + NAD(+) = (2E)-geranial + NADH + H(+). The enzyme catalyses perillyl alcohol + NAD(+) = perillyl aldehyde + NADH + H(+). It participates in terpene metabolism; monoterpene degradation. With respect to regulation, is inhibited by EDTA, N-ethylmaleimide, diethylpyrocarbonate, and 1-cyclohexyl-N-(2-morpholinoethyl)carbodiimide in vitro. Its function is as follows. Involved in the degradation of the monoterpenes beta-myrcene and limonene. During anaerobic degradation of beta-myrcene, catalyzes the NAD(+)-dependent oxidation of geraniol to geranial. Can also catalyze the oxidation of (S)-perillyl alcohol to perillyl aldehyde, and to a lesser extent, the oxidation of nerol, citronellol, cumic alcohol, and benzyl alcohol. Cannot use NADP(+) instead of NAD(+) as cosubstrate. This Castellaniella defragrans (strain DSM 12143 / CCUG 39792 / 65Phen) (Alcaligenes defragrans) protein is Geraniol dehydrogenase.